Consider the following 340-residue polypeptide: UDP-N-acetylenolpyruvoylglucosamine reductase (340 aa).

One can recognise an FAD-binding PCMH-type domain in the interval isoleucine 11–lysine 181. Arginine 156 is an active-site residue. Serine 227 acts as the Proton donor in catalysis. Glutamate 323 is an active-site residue.

The protein belongs to the MurB family. Requires FAD as cofactor.

It is found in the cytoplasm. The enzyme catalyses UDP-N-acetyl-alpha-D-muramate + NADP(+) = UDP-N-acetyl-3-O-(1-carboxyvinyl)-alpha-D-glucosamine + NADPH + H(+). It participates in cell wall biogenesis; peptidoglycan biosynthesis. Cell wall formation. The protein is UDP-N-acetylenolpyruvoylglucosamine reductase of Wigglesworthia glossinidia brevipalpis.